A 1015-amino-acid chain; its full sequence is MSGGLFYNPFLRPNKGLLKKPDKEYLRLIPKCFQTPGAAGVVDVRGPQPPLCFYQDSLTVVGGDEDGKGMWWRQRAQEGTARPEADTHGSPLDFHVYDILETVYTHEKCAVIPSDKQGYVVPCGIVIKLLGRRKADGASVCVNVFGQQAYFYASAPQGLDVEFAVLSALKASTFDRRTPCRVSVEKVTRRSIMGYGNHAGDYHKITLSHPNSVCHVATWLQDKHGCRIFEANVDATRRFVLDNDFVTFGWYSCRRAIPRLQHRDSYAELEYDCEVGDLSVRREDSSWPSYQALAFDIECLGEEGFPTATNEADLILQISCVLWSTGEEAGRYRRILLTLGTCEDIEGVEVYEFPSELDMLYAFFQLIRDLSVEIVTGYNVANFDWPYILDRARHIYSINPASLGKIRAGGVCEVRRPHDAGKGFLRANTKVRITGLIPIDMYAVCRDKLSLSDYKLDTVARHLLGAKKEDVHYKEIPRLFAAGPEGRRRLGMYCVQDSALVMDLLNHFVIHVEVAEIAKIAHIPCRRVLDDGQQIRVFSCLLAAAQKENFILPMPSASDRDGYQGATVIQPLSGFYNSPVLVVDFASLYPSIIQAHNLCYSTMITPGEEHRLAGLRPGEDYESFRLTGGVYHFVKKHVHESFLASLLTSWLAKRKAIKKLLAACEDPRQRTILDKQQLAIKCTCNAVYGFTGVANGLFPCLSIAETVTLQGRTMLERAKAFVEALSPANLQALAPSPDAWAPLNPEGQLRVIYGDTDSLFIECRGFSESETLRFAEALAAHTTRSLFVAPISLEAEKTFSCLMLITKKRYVGVLTDGKTLMKGVELVRKTACKFVQTRCRRVLDLVLADARVKEAASLLSHRPFQESFTQGLPVGFLPVIDILNQAYTDLREGRVPMGELCFSTELSRKLSAYKSTQMPHLAVYQKFVERNEELPQIHDRIQYVFVEPKGGVKGARKTEMAEDPAYAERHGVPVAVDHYFDKLLQGAANILQCLFDNNSGAALSVLQNFTARPPF.

It belongs to the DNA polymerase type-B family. In terms of assembly, forms a complex with the major DNA-binding protein BALF2, the DNA polymerase processivity factor BMRF1, and the alkaline exonuclease BGLF5. Interacts with the putative helicase-primase complex composed of BBLF4, BSLF1 and BBLF2/3 proteins; these interactions may coordinate leading and lagging strand DNA synthesis at the replication fork.

The protein resides in the host nucleus. It catalyses the reaction DNA(n) + a 2'-deoxyribonucleoside 5'-triphosphate = DNA(n+1) + diphosphate. Its function is as follows. Replicates viral genomic DNA in the late phase of lytic infection, producing long concatemeric DNA. The replication complex is composed of six viral proteins: the DNA polymerase, processivity factor, primase, primase-associated factor, helicase, and ssDNA-binding protein. The polypeptide is DNA polymerase catalytic subunit (Homo sapiens (Human)).